A 136-amino-acid chain; its full sequence is Small ribosomal subunit protein uS8c (136 aa).

It belongs to the universal ribosomal protein uS8 family. Part of the 30S ribosomal subunit.

It is found in the plastid. Its subcellular location is the chloroplast. In terms of biological role, one of the primary rRNA binding proteins, it binds directly to 16S rRNA central domain where it helps coordinate assembly of the platform of the 30S subunit. This chain is Small ribosomal subunit protein uS8c (rps8), found in Saccharum hybrid (Sugarcane).